Here is a 360-residue protein sequence, read N- to C-terminus: MNAPLGGIWLWLPLLLTWLTPEVSSSWWYMRATGGSSRVMCDNVPGLVSRQRQLCHRHPDVMRAIGLGVAEWTAECQHQFRQHRWNCNTLDRDHSLFGRVLLRSSRESAFVYAISSAGVVFAITRACSQGELKSCSCDPKKKGTAKDSKGTFDWGGCSDNIDHGIKFARAFVDAKERKGKDARALMNLHNNRAGRKAVKRFLKQECKCHGVSGSCTLRTCWLAMADFRKTGDYLWRKYNGAIQVVMNQDGTGFTVANKRFKKPTKNDLVYFENSPDYCIRDRDAGSLGTAGRVCNLTSRGMDSCEVMCCGRGYDTSHVTRMTKCECKFHWCCAVRCQDCLEALDVHTCKAPKSADWAVPT.

The signal sequence occupies residues 1–25 (MNAPLGGIWLWLPLLLTWLTPEVSS). 11 cysteine pairs are disulfide-bonded: Cys76-Cys87, Cys127-Cys135, Cys137-Cys157, Cys206-Cys220, Cys208-Cys215, Cys278-Cys309, Cys294-Cys304, Cys308-Cys348, Cys324-Cys339, Cys326-Cys336, and Cys331-Cys332. Ser212 carries the O-palmitoleoyl serine; by PORCN lipid modification. A glycan (N-linked (GlcNAc...) asparagine) is linked at Asn295.

It belongs to the Wnt family. Palmitoleoylation is required for efficient binding to frizzled receptors. Depalmitoleoylation leads to Wnt signaling pathway inhibition.

The protein resides in the secreted. It localises to the extracellular space. The protein localises to the extracellular matrix. Ligand for members of the frizzled family of seven transmembrane receptors. Functions in the canonical Wnt signaling pathway that results in activation of transcription factors of the TCF/LEF family. The protein is Protein Wnt-2 (WNT2) of Dasypus novemcinctus (Nine-banded armadillo).